Here is a 463-residue protein sequence, read N- to C-terminus: L-cystine uptake protein TcyP (463 aa).

10 consecutive transmembrane segments (helical) span residues 3–23 (TLLVVLHVFILFLLILGLFVM), 34–54 (VFTALGLGIVFGFALQLIYGP), 73–93 (YVKLLQMVVMPLVFISILGAF), 105–125 (ISGLIIGILVATTAVAAAVGI), 184–204 (PTSTIAVVIFAAFLGVAFLGV), 225–245 (IVMRVVTLILRLTPYGVLAIM), 262–282 (MFVIASYAALITMFIIHLLLL), 338–358 (LSIGQNGCAGIYPAMLAMMIA), 369–389 (VFIITVIAVVAISSFGVAGVG), and 394–414 (FAALLVLSSLNMPVALAGLLI).

This sequence belongs to the dicarboxylate/amino acid:cation symporter (DAACS) (TC 2.A.23) family.

It is found in the cell membrane. Its function is as follows. Mediates uptake of L-cystine, the oxidized form of L-cysteine. Although it is more specific for L-cystine, it could also transport a much broader range of amino acids and sulfur compounds including S-methylcysteine. The sequence is that of L-cystine uptake protein TcyP (tcyP) from Bacillus subtilis (strain 168).